The primary structure comprises 332 residues: Ribose operon repressor (332 aa).

In terms of domain architecture, HTH lacI-type spans 2 to 56; it reads ATMKDIARLAQVSTSTVSHVINGSRFVSDEIREKVMRIVAELNYTPSAVARSLKV. Positions 4 to 23 form a DNA-binding region, H-T-H motif; sequence MKDIARLAQVSTSTVSHVIN.

Its function is as follows. Transcriptional repressor for the ribose rbsDACBK operon. The polypeptide is Ribose operon repressor (rbsR) (Haemophilus influenzae (strain ATCC 51907 / DSM 11121 / KW20 / Rd)).